Reading from the N-terminus, the 162-residue chain is Peptidyl-prolyl cis-trans isomerase (162 aa).

In terms of domain architecture, PPIase cyclophilin-type spans F5 to V161.

The protein belongs to the cyclophilin-type PPIase family. PPIase A subfamily.

The catalysed reaction is [protein]-peptidylproline (omega=180) = [protein]-peptidylproline (omega=0). With respect to regulation, binds cyclosporin A (CsA). CsA mediates some of its effects via an inhibitory action on PPIase. Functionally, PPIases accelerate the folding of proteins. It catalyzes the cis-trans isomerization of proline imidic peptide bonds in oligopeptides. This Paramecium primaurelia protein is Peptidyl-prolyl cis-trans isomerase.